Here is a 96-residue protein sequence, read N- to C-terminus: Envelope glycoprotein N (96 aa).

The first 21 residues, 1 to 21 (MPRSPLIVAVVAAALFAIVRG), serve as a signal peptide directing secretion. Topologically, residues 22–54 (RDPLLDAMRREGAMDFWSAGCYARGVPLSEPPQ) are virion surface. Residues 55 to 75 (ALVVFYVALTAVMVAVALYAY) form a helical membrane-spanning segment. Over 76 to 96 (GLCFRLMGASGPNKKESRGRG) the chain is Intravirion.

Belongs to the herpesviridae glycoprotein N family. Interacts (via N-terminus) with gM (via N-terminus). The gM-gN heterodimer forms the gCII complex.

It localises to the virion membrane. The protein localises to the host membrane. The protein resides in the host Golgi apparatus. Its subcellular location is the host trans-Golgi network. Functionally, envelope glycoprotein necessary for proper maturation of gM and modulation of its membrane fusion activity. Also plays a critical role in virion morphogenesis. In Bos taurus (Bovine), this protein is Envelope glycoprotein N.